A 355-amino-acid polypeptide reads, in one-letter code: Peptide chain release factor 1 (355 aa).

Position 231 is an N5-methylglutamine (Gln231). Residues 281 to 291 show a composition bias toward basic and acidic residues; sequence ERLAKESEARK. Residues 281-302 are disordered; sequence ERLAKESEARKSQVGSGDRSER.

Belongs to the prokaryotic/mitochondrial release factor family. Methylated by PrmC. Methylation increases the termination efficiency of RF1.

The protein localises to the cytoplasm. Its function is as follows. Peptide chain release factor 1 directs the termination of translation in response to the peptide chain termination codons UAG and UAA. The protein is Peptide chain release factor 1 of Campylobacter jejuni subsp. doylei (strain ATCC BAA-1458 / RM4099 / 269.97).